Consider the following 681-residue polypeptide: PAB-dependent poly(A)-specific ribonuclease subunit pan3-like (681 aa).

A C3H1-type zinc finger spans residues 9-38 (FSTNIPCRNEQLYGRCPYIDKGCFFQHKNQ). Disordered stretches follow at residues 38–58 (QDNA…PQNS) and 82–123 (SSAS…TVSL). Low complexity predominate over residues 41–50 (APASSKPPSA). The segment covering 96–106 (KSYSSALSSGK) has biased composition (polar residues). At Ser165 the chain carries Phosphoserine.

The protein belongs to the protein kinase superfamily. PAN3 family.

The protein localises to the cytoplasm. In terms of biological role, regulatory subunit of the poly(A)-nuclease (PAN) deadenylation complex. This chain is PAB-dependent poly(A)-specific ribonuclease subunit pan3-like, found in Schizosaccharomyces pombe (strain 972 / ATCC 24843) (Fission yeast).